Consider the following 326-residue polypeptide: Protein-arginine N-acetylglucosaminyltransferase NleB2 (326 aa).

UDP-N-acetyl-alpha-D-glucosamine contacts are provided by residues 45–47 (QWF), tyrosine 69, and 216–219 (YLDM). The DXD motif signature appears at 218-220 (DMD). Residue aspartate 220 participates in Mn(2+) binding. The active-site Proton acceptor is the glutamate 250. Mn(2+) is bound by residues asparagine 317 and serine 319. Residues serine 319 and 324-326 (SSW) contribute to the UDP-N-acetyl-alpha-D-glucosamine site.

The protein belongs to the glycosyltransferase NleB family. Requires Mn(2+) as cofactor.

The protein resides in the secreted. Its subcellular location is the host cell. The catalysed reaction is L-arginyl-[protein] + UDP-N-acetyl-alpha-D-glucosamine = N(omega)-(N-acetyl-beta-D-glucosaminyl)-L-arginyl-[protein] + UDP + H(+). Functionally, protein-arginine N-acetylglucosaminyltransferase effector that catalyzes the transfer of a single N-acetylglucosamine (GlcNAc) to a conserved arginine residue of host target proteins. In contrast to NleB1, not able to disrupt TNF signaling in infected cells. Shows a lower enzymatic activity than NleB1. This Escherichia coli O145:H28 (strain RM12581) protein is Protein-arginine N-acetylglucosaminyltransferase NleB2.